A 441-amino-acid chain; its full sequence is UDP-N-acetylglucosamine--N-acetylmuramyl-(pentapeptide) pyrophosphoryl-undecaprenol N-acetylglucosamine transferase (441 aa).

Residues 28-30, Asn-140, Arg-176, Ser-204, Ile-257, and Gln-302 each bind UDP-N-acetyl-alpha-D-glucosamine; that span reads TGG.

This sequence belongs to the glycosyltransferase 28 family. MurG subfamily.

It localises to the cell inner membrane. The enzyme catalyses di-trans,octa-cis-undecaprenyl diphospho-N-acetyl-alpha-D-muramoyl-L-alanyl-D-glutamyl-meso-2,6-diaminopimeloyl-D-alanyl-D-alanine + UDP-N-acetyl-alpha-D-glucosamine = di-trans,octa-cis-undecaprenyl diphospho-[N-acetyl-alpha-D-glucosaminyl-(1-&gt;4)]-N-acetyl-alpha-D-muramoyl-L-alanyl-D-glutamyl-meso-2,6-diaminopimeloyl-D-alanyl-D-alanine + UDP + H(+). The protein operates within cell wall biogenesis; peptidoglycan biosynthesis. Cell wall formation. Catalyzes the transfer of a GlcNAc subunit on undecaprenyl-pyrophosphoryl-MurNAc-pentapeptide (lipid intermediate I) to form undecaprenyl-pyrophosphoryl-MurNAc-(pentapeptide)GlcNAc (lipid intermediate II). The protein is UDP-N-acetylglucosamine--N-acetylmuramyl-(pentapeptide) pyrophosphoryl-undecaprenol N-acetylglucosamine transferase of Xanthomonas oryzae pv. oryzae (strain MAFF 311018).